An 857-amino-acid chain; its full sequence is Major vault protein (857 aa).

MVP repeat units follow at residues 18-60 (PYYY…ITIP), 62-122 (RHYC…KVVQ), 123-174 (ANAA…TIIR), 175-227 (PNQA…YVLT), 228-282 (EKNA…NTLT), 284-332 (RQYC…FILG), 333-387 (EDEG…IPLD), and 388-441 (ENEG…VAER). The tract at residues 434-453 (AKDPVAERSDRRGDRAAPRA) is disordered. The span at 437–453 (PVAERSDRRGDRAAPRA) shows a compositional bias: basic and acidic residues. Positions 665-694 (ARHEAERLEQEARGRLERQKIMDEAEAEKS) constitute an IQ domain.

The vault ribonucleoprotein particle is a huge (400 A x 670 A) cage structure of 12.9 MDa. It consists of a dimer of half-vaults, with each half-vault comprising 39 identical major vault protein (MVP) chains, PARP4 and one or more vault RNAs (vRNAs). Expressed in embryos, tube feet and coelomocytes (at protein level). Not expressed in sperm cells (at protein level).

The protein localises to the cytoplasm. It is found in the nucleus. Functionally, required for normal vault structure. Vaults are multi-subunit structures that may act as scaffolds for proteins involved in signal transduction. Vaults may also play a role in nucleo-cytoplasmic transport. This is Major vault protein from Strongylocentrotus purpuratus (Purple sea urchin).